A 355-amino-acid chain; its full sequence is Phosphoribosylformylglycinamidine cyclo-ligase (355 aa).

It belongs to the AIR synthase family.

Its subcellular location is the cytoplasm. It carries out the reaction 2-formamido-N(1)-(5-O-phospho-beta-D-ribosyl)acetamidine + ATP = 5-amino-1-(5-phospho-beta-D-ribosyl)imidazole + ADP + phosphate + H(+). It participates in purine metabolism; IMP biosynthesis via de novo pathway; 5-amino-1-(5-phospho-D-ribosyl)imidazole from N(2)-formyl-N(1)-(5-phospho-D-ribosyl)glycinamide: step 2/2. This is Phosphoribosylformylglycinamidine cyclo-ligase from Methylobacterium sp. (strain 4-46).